Consider the following 264-residue polypeptide: S-adenosylmethionine decarboxylase proenzyme (264 aa).

Serine 113 serves as the catalytic Schiff-base intermediate with substrate; via pyruvic acid. Serine 113 carries the post-translational modification Pyruvic acid (Ser); by autocatalysis. Histidine 118 functions as the Proton acceptor; for processing activity in the catalytic mechanism. Cysteine 141 serves as the catalytic Proton donor; for catalytic activity.

The protein belongs to the prokaryotic AdoMetDC family. Type 2 subfamily. In terms of assembly, heterooctamer of four alpha and four beta chains arranged as a tetramer of alpha/beta heterodimers. The cofactor is pyruvate. Is synthesized initially as an inactive proenzyme. Formation of the active enzyme involves a self-maturation process in which the active site pyruvoyl group is generated from an internal serine residue via an autocatalytic post-translational modification. Two non-identical subunits are generated from the proenzyme in this reaction, and the pyruvate is formed at the N-terminus of the alpha chain, which is derived from the carboxyl end of the proenzyme. The post-translation cleavage follows an unusual pathway, termed non-hydrolytic serinolysis, in which the side chain hydroxyl group of the serine supplies its oxygen atom to form the C-terminus of the beta chain, while the remainder of the serine residue undergoes an oxidative deamination to produce ammonia and the pyruvoyl group blocking the N-terminus of the alpha chain.

It carries out the reaction S-adenosyl-L-methionine + H(+) = S-adenosyl 3-(methylsulfanyl)propylamine + CO2. Its pathway is amine and polyamine biosynthesis; S-adenosylmethioninamine biosynthesis; S-adenosylmethioninamine from S-adenosyl-L-methionine: step 1/1. In terms of biological role, catalyzes the decarboxylation of S-adenosylmethionine to S-adenosylmethioninamine (dcAdoMet), the propylamine donor required for the synthesis of the polyamines spermine and spermidine from the diamine putrescine. This chain is S-adenosylmethionine decarboxylase proenzyme, found in Stenotrophomonas maltophilia (strain R551-3).